The primary structure comprises 460 residues: tRNA modification GTPase MnmE (460 aa).

Residues Arg23, Glu86, and Arg126 each coordinate (6S)-5-formyl-5,6,7,8-tetrahydrofolate. Residues 222-381 (GLSTAIIGRP…LEAAIASLFF (160 aa)) enclose the TrmE-type G domain. A K(+)-binding site is contributed by Asn232. Residues 232–237 (NVGKSS), 251–257 (TDIAGTT), and 276–279 (DTAG) each bind GTP. Ser236 is a binding site for Mg(2+). K(+) contacts are provided by Thr251, Ile253, and Thr256. Thr257 serves as a coordination point for Mg(2+). Lys460 serves as a coordination point for (6S)-5-formyl-5,6,7,8-tetrahydrofolate.

This sequence belongs to the TRAFAC class TrmE-Era-EngA-EngB-Septin-like GTPase superfamily. TrmE GTPase family. Homodimer. Heterotetramer of two MnmE and two MnmG subunits. It depends on K(+) as a cofactor.

The protein localises to the cytoplasm. Its function is as follows. Exhibits a very high intrinsic GTPase hydrolysis rate. Involved in the addition of a carboxymethylaminomethyl (cmnm) group at the wobble position (U34) of certain tRNAs, forming tRNA-cmnm(5)s(2)U34. The chain is tRNA modification GTPase MnmE from Exiguobacterium sibiricum (strain DSM 17290 / CCUG 55495 / CIP 109462 / JCM 13490 / 255-15).